Reading from the N-terminus, the 47-residue chain is MWRMWKILDYRRTVVLAHVGMAVLALLIHFILLSTESFNWLEGNPYG.

Topologically, residues 1-12 (MWRMWKILDYRR) are cytoplasmic. Residues 13 to 33 (TVVLAHVGMAVLALLIHFILL) form a helical membrane-spanning segment. An a bacteriochlorophyll-binding site is contributed by H29. The Periplasmic portion of the chain corresponds to 34 to 47 (STESFNWLEGNPYG).

This sequence belongs to the antenna complex alpha subunit family. As to quaternary structure, the core complex is formed by different alpha and beta chains, binding bacteriochlorophyll molecules, and arranged most probably in tetrameric structures disposed around the reaction center. The non-pigmented gamma chains may constitute additional components.

The protein resides in the cell inner membrane. Antenna complexes are light-harvesting systems, which transfer the excitation energy to the reaction centers. This is Light-harvesting protein B800/850/890 alpha-2 chain from Halorhodospira halophila (strain DSM 244 / SL1) (Ectothiorhodospira halophila (strain DSM 244 / SL1)).